Consider the following 537-residue polypeptide: DELLA protein GAI (537 aa).

The interval 1-33 (MKRDHQEISGSGSNPAESSSIKGKLWEEDPDAG) is disordered. Residues 9–20 (SGSGSNPAESSS) are compositionally biased toward low complexity. Residues 37 to 41 (DELLA) carry the DELLA motif motif. The segment at 131–157 (KSDPGLEITRKRAKTESSSSSSSTTTR) is disordered. Residues 147–156 (SSSSSSSTTT) show a composition bias toward low complexity. In terms of domain architecture, GRAS spans 162-533 (IDSQEAGVRL…RPLIAHLGLA (372 aa)). The interval 169–223 (VRLVHTLMACAEAVQQDNLKLADALVKHIGLLASSQTGAMRKVATYFAEALARRI) is leucine repeat I (LRI). Residues 241 to 306 (QIPFYETCPY…GGPPAFRLTG (66 aa)) are VHIID. The VHIID motif lies at 272–276 (VHVID). Residues 320-352 (QVGWKLAQLAERIGIEFEFRGFVANSLADLEPE) form a leucine repeat II (LRII) region. Positions 364–454 (VAVNAVFELH…ELYLGRQICN (91 aa)) are PFYRE. An LXXLL motif motif is present at residues 372–376 (LHPLL). Positions 457–533 (ACEGMDRVER…RPLIAHLGLA (77 aa)) are SAW.

It belongs to the GRAS family. DELLA subfamily. Phosphorylated. Post-translationally, ubiquitinated. Upon GA application it is ubiquitinated, leading to its subsequent degradation.

The protein localises to the nucleus. Its function is as follows. Probable transcriptional regulator that acts as a repressor of the gibberellin (GA) signaling pathway. Probably acts by participating in large multiprotein complexes that represses transcription of GA-inducible genes. Upon GA application, it is degraded by the proteasome, allowing the GA signaling pathway. This chain is DELLA protein GAI (GAI), found in Gossypium hirsutum (Upland cotton).